Here is a 227-residue protein sequence, read N- to C-terminus: 7-cyano-7-deazaguanine synthase (227 aa).

7-17 contacts ATP; that stretch reads VSGGMDSLVAT. 4 residues coordinate Zn(2+): Cys-187, Cys-195, Cys-198, and Cys-201.

This sequence belongs to the QueC family. The cofactor is Zn(2+).

The catalysed reaction is 7-carboxy-7-deazaguanine + NH4(+) + ATP = 7-cyano-7-deazaguanine + ADP + phosphate + H2O + H(+). It participates in purine metabolism; 7-cyano-7-deazaguanine biosynthesis. In terms of biological role, catalyzes the ATP-dependent conversion of 7-carboxy-7-deazaguanine (CDG) to 7-cyano-7-deazaguanine (preQ(0)). The chain is 7-cyano-7-deazaguanine synthase from Chlorobaculum tepidum (strain ATCC 49652 / DSM 12025 / NBRC 103806 / TLS) (Chlorobium tepidum).